A 344-amino-acid polypeptide reads, in one-letter code: MDPTVVLITGCSSGIGMHLAVRLASDRSQSFKVYATLRDLKAQGPLLEAARTQGCPPGSLEILELDVRDSKSVAAAQACVTEGRVDVLVCNAGRGLFGPLEAHELNAVGAVLDVNVLGTIRMLQAFLPDMKRRHSGRVLVTASVGGLMGLPFHEVYCASKFALEGLCESLAILLPLFGVHVSLIECGAVHTAFYEKLVGGPGGALERADAQTRHLFAHYLRGYEQALSEAQDPEEVTELFLTAMRAPQPALRYFSTNRFLPLARMRTEDPSGSSYVAAMHQEAFSNLQTQENAKAGAQVPGVSDTASSALICLPECAIPRVASELGWSASDKPGQDNSCYQQKI.

3–32 (PTVVLITGCSSGIGMHLAVRLASDRSQSFK) contributes to the NAD(+) binding site. Residues 10-38 (GCSS…ATLR) and Asp66 contribute to the NADP(+) site. Ser135 bears the Phosphoserine mark. Ser143 is a binding site for substrate. Catalysis depends on Tyr156, which acts as the Proton acceptor. NADP(+) is bound at residue Lys160.

The protein belongs to the short-chain dehydrogenases/reductases (SDR) family. In terms of assembly, homodimer. Exists predominantly as a homodimer but also exits as monomer.

Its subcellular location is the cytoplasm. It catalyses the reaction 17beta-estradiol + NAD(+) = estrone + NADH + H(+). The enzyme catalyses 17beta-estradiol + NADP(+) = estrone + NADPH + H(+). It carries out the reaction testosterone + NADP(+) = androst-4-ene-3,17-dione + NADPH + H(+). It functions in the pathway steroid biosynthesis; estrogen biosynthesis. Favors the reduction of estrogens and androgens. Converts estrone (E1) to a more potent estrogen, 17beta-estradiol (E2). Also has 20-alpha-HSD activity. Uses preferentially NADH. The polypeptide is 17-beta-hydroxysteroid dehydrogenase type 1 (Mus musculus (Mouse)).